The primary structure comprises 362 residues: Alpha-tubulin N-acetyltransferase (362 aa).

The N-acetyltransferase domain maps to 1–177 (MQFGCNVAEA…NNFLMLDASI (177 aa)). Residues 111-124 (FYTH…GIGT) and 147-156 (SPKLLAFLSK) each bind acetyl-CoA.

The protein belongs to the acetyltransferase ATAT1 family.

The enzyme catalyses L-lysyl-[alpha-tubulin] + acetyl-CoA = N(6)-acetyl-L-lysyl-[alpha-tubulin] + CoA + H(+). Functionally, specifically acetylates 'Lys-40' in alpha-tubulin on the lumenal side of microtubules. Promotes microtubule destabilization and accelerates microtubule dynamics; this activity may be independent of acetylation activity. Acetylates alpha-tubulin with a slow enzymatic rate, due to a catalytic site that is not optimized for acetyl transfer. Enters the microtubule through each end and diffuses quickly throughout the lumen of microtubules. Acetylates only long/old microtubules because of its slow acetylation rate since it does not have time to act on dynamically unstable microtubules before the enzyme is released. This Giardia intestinalis (strain ATCC 50803 / WB clone C6) (Giardia lamblia) protein is Alpha-tubulin N-acetyltransferase.